The primary structure comprises 440 residues: Actin-like protein 7A (440 aa).

Residues 1–29 are disordered; sequence MSLDGVWAPQTANIGDGPAKKASDQASMQ. The tract at residues 36 to 56 is required for interaction with TES; sequence ASLKDGPAKRAVWVRRDNAET.

It belongs to the actin family. As to quaternary structure, interacts (via N-terminus) with TES (via LIM domain 2). Heterodimer with TES; the heterodimer interacts with ENAH to form a heterotrimer. Interacts with ACTL9. Interacts with CYLC1; the interaction may be relevant for proper acrosome attachment to the nuclear envelope. As to expression, detected in testis. Detected at the acrosome of round spermatids (at protein level). Detected in adult and embryonic testis. Detected in developing male germ cells.

Its subcellular location is the cytoplasm. The protein resides in the cytoskeleton. It localises to the golgi apparatus. It is found in the nucleus. The protein localises to the cytoplasmic vesicle. Its subcellular location is the secretory vesicle. The protein resides in the acrosome. Its function is as follows. Essential for normal spermatogenesis and male fertility. Required for normal sperm head morphology, acroplaxome formation, acrosome attachment, and acrosome granule stability. May anchor and stabilize acrosomal adherence to the acroplaxome at least in part by facilitating the presence of F-actin in the subacrosomal space. May play an important role in formation and fusion of Golgi-derived vesicles during acrosome biogenesis. In Mus musculus (Mouse), this protein is Actin-like protein 7A (Actl7a).